The sequence spans 553 residues: Keratin, type II cytoskeletal 6A (553 aa).

Positions 1–20 (MSTKTTIKSQTSHRGYSASS) are enriched in polar residues. The interval 1 to 21 (MSTKTTIKSQTSHRGYSASSA) is disordered. A head region spans residues 1–151 (MSTKTTIKSQ…DPTIQRVRTE (151 aa)). The coil 1A stretch occupies residues 152–187 (EREQIKTLNNKFASFIDKVRFLEQQNKVLDTKWALL). In terms of domain architecture, IF rod spans 152–465 (EREQIKTLNN…KLLEGEECRL (314 aa)). A linker 1 region spans residues 188-206 (QEQGTKTVRQNLEPMFEQY). Positions 207-298 (ISNLRRQLDS…ALYEAELSQM (92 aa)) are coil 1B. Residues 299-322 (QTHISDTSVVLSMDNNRSLDLDSI) form a linker 12 region. The segment at 323 to 461 (IAEVKAQYED…ATYRKLLEGE (139 aa)) is coil 2. Residues 462 to 553 (ECRLNGEGVG…TSSSKKSYRQ (92 aa)) are tail. The segment at 528–553 (LSSSGGLSSSTIKYTTTSSSKKSYRQ) is disordered. Residues 531-553 (SGGLSSSTIKYTTTSSSKKSYRQ) are compositionally biased toward low complexity.

Belongs to the intermediate filament family. In terms of assembly, heterodimer of a type I and a type II keratin. KRT6 isomers associate with KRT16 and/or KRT17. Interacts with TCHP. In terms of tissue distribution, predominates in the adult trunk skin, tongue, trachea/esophagus and eye. In adult skin, localization is restricted to hair follicles, where it is localized predominantly in the outer root sheath.

Functionally, epidermis-specific type I keratin involved in wound healing. Involved in the activation of follicular keratinocytes after wounding, while it does not play a major role in keratinocyte proliferation or migration. Participates in the regulation of epithelial migration by inhibiting the activity of SRC during wound repair. The protein is Keratin, type II cytoskeletal 6A (Krt6a) of Mus musculus (Mouse).